The sequence spans 54 residues: Large ribosomal subunit protein bL32c (54 aa).

Belongs to the bacterial ribosomal protein bL32 family.

The protein resides in the plastid. The protein localises to the chloroplast. The protein is Large ribosomal subunit protein bL32c of Lactuca sativa (Garden lettuce).